Consider the following 240-residue polypeptide: MYLLLYVDDILLTGSSNTLLNMLIFQLSSTFSMKDLGPVHYFLGIQIKTHPSGLFLSQTKYAEQILNNAGMLDCKPMSTPLPLKLNSSVSTAKYPDPSDFRSIVGALQYLTLTRPDISYAVNIVCQRMHEPTLADFDLLKRVLRYVKGTIFHGLYIHKNSKLNVQAFCDSDWAGCTSTRRSTTGFCTFLGCNIISWSAKRQPTVSRSSTETEYRALALTAAELTWSSASRSRDPSAMNTN.

Its subcellular location is the mitochondrion. This is an uncharacterized protein from Arabidopsis thaliana (Mouse-ear cress).